The following is a 253-amino-acid chain: DNA repair protein RecO (253 aa).

It belongs to the RecO family.

Its function is as follows. Involved in DNA repair and RecF pathway recombination. The protein is DNA repair protein RecO of Staphylococcus epidermidis (strain ATCC 35984 / DSM 28319 / BCRC 17069 / CCUG 31568 / BM 3577 / RP62A).